Here is a 484-residue protein sequence, read N- to C-terminus: Aspartyl/glutamyl-tRNA(Asn/Gln) amidotransferase subunit B (484 aa).

Belongs to the GatB/GatE family. GatB subfamily. In terms of assembly, heterotrimer of A, B and C subunits.

It catalyses the reaction L-glutamyl-tRNA(Gln) + L-glutamine + ATP + H2O = L-glutaminyl-tRNA(Gln) + L-glutamate + ADP + phosphate + H(+). The enzyme catalyses L-aspartyl-tRNA(Asn) + L-glutamine + ATP + H2O = L-asparaginyl-tRNA(Asn) + L-glutamate + ADP + phosphate + 2 H(+). Its function is as follows. Allows the formation of correctly charged Asn-tRNA(Asn) or Gln-tRNA(Gln) through the transamidation of misacylated Asp-tRNA(Asn) or Glu-tRNA(Gln) in organisms which lack either or both of asparaginyl-tRNA or glutaminyl-tRNA synthetases. The reaction takes place in the presence of glutamine and ATP through an activated phospho-Asp-tRNA(Asn) or phospho-Glu-tRNA(Gln). In Bordetella parapertussis (strain 12822 / ATCC BAA-587 / NCTC 13253), this protein is Aspartyl/glutamyl-tRNA(Asn/Gln) amidotransferase subunit B.